Here is an 84-residue protein sequence, read N- to C-terminus: Cell division topological specificity factor (84 aa).

The protein belongs to the MinE family.

Prevents the cell division inhibition by proteins MinC and MinD at internal division sites while permitting inhibition at polar sites. This ensures cell division at the proper site by restricting the formation of a division septum at the midpoint of the long axis of the cell. The sequence is that of Cell division topological specificity factor from Pseudomonas entomophila (strain L48).